We begin with the raw amino-acid sequence, 438 residues long: Probable glucose-6-phosphate isomerase (438 aa).

Glutamate 280 functions as the Proton donor in the catalytic mechanism. Catalysis depends on residues histidine 301 and lysine 410.

It belongs to the GPI family.

It is found in the cytoplasm. The catalysed reaction is alpha-D-glucose 6-phosphate = beta-D-fructose 6-phosphate. It participates in carbohydrate biosynthesis; gluconeogenesis. Its pathway is carbohydrate degradation; glycolysis; D-glyceraldehyde 3-phosphate and glycerone phosphate from D-glucose: step 2/4. Catalyzes the reversible isomerization of glucose-6-phosphate to fructose-6-phosphate. In Methanococcus maripaludis (strain DSM 14266 / JCM 13030 / NBRC 101832 / S2 / LL), this protein is Probable glucose-6-phosphate isomerase.